The chain runs to 233 residues: Glucosamine-6-phosphate deaminase (233 aa).

The active-site Proton acceptor; for enolization step is the Asp-62. The active-site For ring-opening step is the Asn-128. Catalysis depends on His-130, which acts as the Proton acceptor; for ring-opening step. Glu-135 acts as the For ring-opening step in catalysis.

The protein belongs to the glucosamine/galactosamine-6-phosphate isomerase family. NagB subfamily.

The enzyme catalyses alpha-D-glucosamine 6-phosphate + H2O = beta-D-fructose 6-phosphate + NH4(+). Its pathway is amino-sugar metabolism; N-acetylneuraminate degradation; D-fructose 6-phosphate from N-acetylneuraminate: step 5/5. In terms of biological role, catalyzes the reversible isomerization-deamination of glucosamine 6-phosphate (GlcN6P) to form fructose 6-phosphate (Fru6P) and ammonium ion. This Streptococcus thermophilus (strain ATCC BAA-491 / LMD-9) protein is Glucosamine-6-phosphate deaminase.